The primary structure comprises 348 residues: Benzoate 1,2-dioxygenase electron transfer component (348 aa).

The 96-residue stretch at 14–109 folds into the 2Fe-2S ferredoxin-type domain; that stretch reads HQVALQFEDG…DAVFQIQASS (96 aa). [2Fe-2S] cluster contacts are provided by Cys-51, Cys-56, Cys-59, and Cys-93. Positions 111-348 are ferredoxin-reductase; the sequence is VCKTKIHHFE…NFLFEKFSAN (238 aa). The region spanning 116–217 is the FAD-binding FR-type domain; it reads IHHFEGTLAR…TGPFGSFYLR (102 aa).

It belongs to the bacterial ring-hydroxylating dioxygenase ferredoxin reductase family. In terms of assembly, this dioxygenase system consists of three proteins: the two subunits of the hydroxylase component (BenA and BenB), and an electron transfer component (BenC). FAD serves as cofactor. [2Fe-2S] cluster is required as a cofactor.

It carries out the reaction 2 reduced [2Fe-2S]-[ferredoxin] + NAD(+) + H(+) = 2 oxidized [2Fe-2S]-[ferredoxin] + NADH. Its pathway is xenobiotic degradation; toluene degradation. Functionally, electron transfer component of benzoate 1,2-dioxygenase system. This Acinetobacter baylyi (strain ATCC 33305 / BD413 / ADP1) protein is Benzoate 1,2-dioxygenase electron transfer component (benC).